The following is a 346-amino-acid chain: Transposase for insertion sequence element IS1533 (346 aa).

This sequence belongs to the transposase IS1111A/IS1328/IS1533 family.

Functionally, required for the transposition of the insertion element. The chain is Transposase for insertion sequence element IS1533 (tnhA) from Leptospira borgpetersenii.